The chain runs to 118 residues: Elicitin (118 aa).

An N-terminal signal peptide occupies residues 1-20; the sequence is MNFRALFAATVAALVGSTSA. 3 disulfide bridges follow: Cys23-Cys91, Cys47-Cys76, and Cys71-Cys115.

Belongs to the elicitin family.

The protein localises to the secreted. Functionally, induces local and distal defense responses (incompatible hypersensitive reaction) in plants from the solanaceae and cruciferae families. Elicits leaf necrosis and causes the accumulation of pathogenesis-related proteins. Might interact with the lipidic molecules of the plasma membrane. In Phytophthora nicotianae (Potato buckeye rot agent), this protein is Elicitin (PARA1).